The primary structure comprises 188 residues: FMN-dependent NADPH-azoreductase (188 aa).

Belongs to the azoreductase type 2 family. Homotetramer. FMN serves as cofactor.

Catalyzes the reductive cleavage of azo bond in aromatic azo compounds to the corresponding amines. Requires NADPH, but not NADH, as an electron donor for its activity. The protein is FMN-dependent NADPH-azoreductase (azo1) of Staphylococcus epidermidis (strain ATCC 12228 / FDA PCI 1200).